A 430-amino-acid polypeptide reads, in one-letter code: Sorting nexin-30 (430 aa).

Residues 1 to 18 (MSNGGTPRSLPSSGQKSI) show a composition bias toward polar residues. Positions 1–66 (MSNGGTPRSL…SSPASSSSLL (66 aa)) are disordered. The span at 57-66 (SSPASSSSLL) shows a compositional bias: low complexity. The 122-residue stretch at 80-201 (RDLFVTVDDP…AFLSAKDLNK (122 aa)) folds into the PX domain. 4 residues coordinate a 1,2-diacyl-sn-glycero-3-phospho-(1D-myo-inositol-3-phosphate): Arg123, Gln125, Lys153, and Arg167. Residues 223–428 (KLRGRPVEFA…LQDKQDAKGE (206 aa)) form the BAR domain.

Belongs to the sorting nexin family.

It localises to the early endosome membrane. In terms of biological role, involved in the regulation of endocytosis and in several stages of intracellular trafficking. Together with snx4, involved in autophagosome assembly. The chain is Sorting nexin-30 (snx30) from Danio rerio (Zebrafish).